The chain runs to 290 residues: AA9 family lytic polysaccharide monooxygenase A (290 aa).

An N-terminal signal peptide occupies residues 1 to 17 (MKLSLLASVALVPFVSA). The Cu(2+) site is built by histidine 18 and histidine 101. Cysteine 67 and cysteine 189 are oxidised to a cystine. Histidine 176 is an O2 binding site. Tyrosine 187 contributes to the Cu(2+) binding site. Residues asparagine 220 and asparagine 254 are each glycosylated (N-linked (GlcNAc...) asparagine). A disordered region spans residues 240–290 (GGSGSGSSSYSKVANVTSSDESSQSGASSSQGTVSTCPNKYNRRHARQFKP). Over residues 245-275 (GSSSYSKVANVTSSDESSQSGASSSQGTVST) the composition is skewed to low complexity. The span at 280–290 (YNRRHARQFKP) shows a compositional bias: basic residues.

This sequence belongs to the polysaccharide monooxygenase AA9 family. Cu(2+) serves as cofactor.

It localises to the secreted. It carries out the reaction [(1-&gt;4)-beta-D-glucosyl]n+m + reduced acceptor + O2 = 4-dehydro-beta-D-glucosyl-[(1-&gt;4)-beta-D-glucosyl]n-1 + [(1-&gt;4)-beta-D-glucosyl]m + acceptor + H2O.. In terms of biological role, lytic polysaccharide monooxygenase (LPMO) that depolymerizes crystalline and amorphous polysaccharides via the oxidation of scissile alpha- or beta-(1-4)-glycosidic bonds, yielding exclusively C1 oxidation products. Catalysis by LPMOs requires the reduction of the active-site copper from Cu(II) to Cu(I) by a reducing agent and H(2)O(2) or O(2) as a cosubstrate. The sequence is that of AA9 family lytic polysaccharide monooxygenase A from Aspergillus fumigatus (strain ATCC MYA-4609 / CBS 101355 / FGSC A1100 / Af293) (Neosartorya fumigata).